The chain runs to 314 residues: Olfactory receptor 8U9 (314 aa).

Topologically, residues 1-25 (MAQINCTQVTEFILVGLTDREELKM) are extracellular. Asn-5 is a glycosylation site (N-linked (GlcNAc...) asparagine). Residues 26-46 (PLFVVFLSIYLFTTLGNLGLI) form a helical membrane-spanning segment. Over 47 to 54 (LVIRTDAR) the chain is Cytoplasmic. A helical transmembrane segment spans residues 55 to 75 (LHTPMYFFLSNLAFVDFCYSS). At 76–99 (VITPKMLGNFLYKQNMISFNACAA) the chain is on the extracellular side. A disulfide bridge links Cys-97 with Cys-189. A helical transmembrane segment spans residues 100–120 (QLGCFLAFMTAECLLLASMAY). Topologically, residues 121 to 133 (DRYVAICNPLLYM) are cytoplasmic. The helical transmembrane segment at 134-154 (VLMSPGICFQLVAAPYSYSFL) threads the bilayer. Over 155–196 (VALFHAILTFRLCYCHSNAINHFYCDDMPLLRLTCSDTHSKQ) the chain is Extracellular. A helical membrane pass occupies residues 197-217 (LWIFVCAGIMFISSLLIVFIS). The Cytoplasmic segment spans residues 218 to 237 (YTFIISAILRMRSAEGRRKA). The helical transmembrane segment at 238–258 (FSTCGSHMLAVTIFYGTLIFM) threads the bilayer. At 259 to 271 (YLQPSSNHSLDTD) the chain is on the extracellular side. N-linked (GlcNAc...) asparagine glycosylation occurs at Asn-265. A helical membrane pass occupies residues 272–292 (KMASVFYTVIIPMLNPLIYSL). Topologically, residues 293 to 314 (RNKEVKDALKKLIASKNQMLSS) are cytoplasmic.

This sequence belongs to the G-protein coupled receptor 1 family.

It is found in the cell membrane. Functionally, potential odorant receptor. This is Olfactory receptor 8U9 from Mus musculus (Mouse).